Consider the following 639-residue polypeptide: Serine protease HtrA-like (639 aa).

Composition is skewed to basic and acidic residues over residues methionine 1–glutamine 13, tyrosine 21–glutamine 75, glutamine 106–serine 187, and lysine 195–lysine 205. The disordered stretch occupies residues methionine 1–threonine 262. Residues alanine 206–tyrosine 219 show a composition bias toward polar residues. 2 stretches are compositionally biased toward basic and acidic residues: residues threonine 220–lysine 235 and asparagine 245–threonine 262. A helical membrane pass occupies residues isoleucine 277 to methionine 297. Catalysis depends on charge relay system residues histidine 374, aspartate 404, and serine 489. The region spanning glutamate 527–glycine 629 is the PDZ domain.

It belongs to the peptidase S1C family.

It is found in the cell membrane. The protein is Serine protease HtrA-like of Staphylococcus haemolyticus (strain JCSC1435).